The following is a 340-amino-acid chain: Glycerol-3-phosphate dehydrogenase [NAD(P)+] (340 aa).

Residues Ser-11, Trp-12, Arg-32, Arg-33, and Lys-106 each contribute to the NADPH site. Lys-106, Gly-138, and Ser-140 together coordinate sn-glycerol 3-phosphate. Residue Ala-142 participates in NADPH binding. Residues Lys-193, Asp-246, Ser-256, Arg-257, and Asn-258 each coordinate sn-glycerol 3-phosphate. Lys-193 (proton acceptor) is an active-site residue. Arg-257 lines the NADPH pocket. NADPH is bound by residues Val-281 and Glu-283.

This sequence belongs to the NAD-dependent glycerol-3-phosphate dehydrogenase family.

The protein resides in the cytoplasm. The enzyme catalyses sn-glycerol 3-phosphate + NAD(+) = dihydroxyacetone phosphate + NADH + H(+). It carries out the reaction sn-glycerol 3-phosphate + NADP(+) = dihydroxyacetone phosphate + NADPH + H(+). The protein operates within membrane lipid metabolism; glycerophospholipid metabolism. Its function is as follows. Catalyzes the reduction of the glycolytic intermediate dihydroxyacetone phosphate (DHAP) to sn-glycerol 3-phosphate (G3P), the key precursor for phospholipid synthesis. The protein is Glycerol-3-phosphate dehydrogenase [NAD(P)+] of Shouchella clausii (strain KSM-K16) (Alkalihalobacillus clausii).